Here is a 344-residue protein sequence, read N- to C-terminus: L-rhamnose-proton symporter (344 aa).

Transmembrane regions (helical) follow at residues 4–24 (PILL…CFYA), 38–58 (WSLG…WWLL), 68–88 (FDMA…IGNI), 101–121 (MGIG…TPVL), 137–157 (TLLG…AGLL), 175–195 (LILA…MDAA), 207–227 (INAL…GAVV), 255–275 (LIAN…QFFF), 290–310 (ISWM…GLLF), and 324–344 (LVLG…GMAA).

Belongs to the L-rhamnose transporter (TC 2.A.7.6) family.

It is found in the cell inner membrane. It catalyses the reaction L-rhamnopyranose(in) + H(+)(in) = L-rhamnopyranose(out) + H(+)(out). Functionally, uptake of L-rhamnose across the cytoplasmic membrane with the concomitant transport of protons into the cell (symport system). The polypeptide is L-rhamnose-proton symporter (Pectobacterium carotovorum subsp. carotovorum (strain PC1)).